The chain runs to 464 residues: MTVVSVEHALAGKLPEGGEVTVRGWVRTLRGSAGLAFINVTDGSCFAPIQVVANDTLPNFDEIKRLTSGCSLIAKGVLVKSQGKGQSFEIQASGVDVVGWVEDPLTYPIQPKPMTPEFLREVAHLRPRTNLFGAVTRIRNCLAQAVHRFFHQNGFNWISTPIITTSDAEGAGQMFRVSTLDMVNLPRDASGAVDFSRDFFGKETFLTVSGQLNVEAYCLALSKVYTFGPTFRAENSHTTRHLAEFWMIEPEIAFADLAEDARLAEQFLKYLFRAVLDERGDDLAFLAERVDKNAIAKLEAFINAPFEQIDYTDAVKLLQNSGKKFDFPVEWGLDLQTEHERWLTEEHIGRPVVVTNYPEHIKAFYMRLNDDGKTVAAMDVLAPGIGEIIGGSQREERLDVLDARMAQFGLDKEHYSWYRDFRRYGSVPHAGFGLGFERLVVYVCGLSNIRDAIPYPRAPGSAEF.

The protein belongs to the class-II aminoacyl-tRNA synthetase family. Homodimer.

The protein localises to the cytoplasm. It catalyses the reaction tRNA(Asn) + L-asparagine + ATP = L-asparaginyl-tRNA(Asn) + AMP + diphosphate + H(+). The protein is Asparagine--tRNA ligase of Xanthomonas axonopodis pv. citri (strain 306).